Here is a 163-residue protein sequence, read N- to C-terminus: Deoxyuridine 5'-triphosphate nucleotidohydrolase (163 aa).

Belongs to the dUTPase family. The cofactor is Mg(2+).

The enzyme catalyses dUTP + H2O = dUMP + diphosphate + H(+). It functions in the pathway pyrimidine metabolism; dUMP biosynthesis; dUMP from dCTP (dUTP route): step 2/2. Functionally, this enzyme is involved in nucleotide metabolism: it produces dUMP, the immediate precursor of thymidine nucleotides and it decreases the intracellular concentration of dUTP so that uracil cannot be incorporated into DNA. This is Deoxyuridine 5'-triphosphate nucleotidohydrolase from Galliformes (FAdV-8).